The chain runs to 229 residues: 2-C-methyl-D-erythritol 4-phosphate cytidylyltransferase (229 aa).

This sequence belongs to the IspD/TarI cytidylyltransferase family. IspD subfamily.

It carries out the reaction 2-C-methyl-D-erythritol 4-phosphate + CTP + H(+) = 4-CDP-2-C-methyl-D-erythritol + diphosphate. The protein operates within isoprenoid biosynthesis; isopentenyl diphosphate biosynthesis via DXP pathway; isopentenyl diphosphate from 1-deoxy-D-xylulose 5-phosphate: step 2/6. In terms of biological role, catalyzes the formation of 4-diphosphocytidyl-2-C-methyl-D-erythritol from CTP and 2-C-methyl-D-erythritol 4-phosphate (MEP). This chain is 2-C-methyl-D-erythritol 4-phosphate cytidylyltransferase, found in Neisseria meningitidis serogroup C (strain 053442).